We begin with the raw amino-acid sequence, 386 residues long: MERVSITERPDWREKAHEYGFNFHTMYGEPYWCEDAYYKLTLAQVEKLEEVTAELHQMCLKVVEKVIASDELMTKFRIPKHTWSFVRQSWLTHQPSLYSRLDLAWDGTGEPKLLENNADTPTSLYEAAFFQWIWLEDQLNAGNLPEGSDQFNSLQEKLIDRFVELREQYGFQLLHLTCCRDTVEDRGTIQYLQDCATEAEIATEFLYIDDIGLGEKGQFTDLQDQVISNLFKLYPWEFMLREMFSTKLEDAGVRWLEPAWKSIISNKALLPLLWEMFPNHPNLLPAYFAEDDHPQMEKYVVKPIFSREGANVSIIENGKTIEAAEGPYGEEGMIVQQFHPLPKFGDSYMLIGSWLVNDQPAGIGIREDRALITQDMSRFYPHIFVE.

Position 100–102 (100–102 (RLD)) interacts with ATP. Positions 102, 115, and 117 each coordinate Mg(2+). Residues Lys-267, Lys-302, Gly-309, Gln-336, and 371 to 373 (LIT) each bind ATP.

Belongs to the glutathionylspermidine synthase preATP-grasp family.

Functionally, may be a ligase forming an amide bond. Shows ATPase activity. The chain is Putative acid--amine ligase YgiC (ygiC) from Escherichia coli O157:H7.